A 414-amino-acid polypeptide reads, in one-letter code: CinA-like protein (414 aa).

It belongs to the CinA family.

The sequence is that of CinA-like protein from Koribacter versatilis (strain Ellin345).